The following is a 112-amino-acid chain: MQPDYFTADYDVENMHVNMNKHYILEEALKLNLPKKIVPIPHKITLPKINLATAIDTSKYNDLQNKVLSKFQDIIDTHNETNEEELLAYEQEIFLELVKDPKTIEKLKVIVG.

This is an uncharacterized protein from Rickettsia conorii (strain ATCC VR-613 / Malish 7).